Reading from the N-terminus, the 66-residue chain is Putative alpha-neurotoxin RjAa13 (66 aa).

Positions 1–60 (KEGYPVDWGNCKYECMSDAYCKDLCVDRKAKSGYCYKLNWSCYCEGLPDDSPIKTNGHCR) constitute an LCN-type CS-alpha/beta domain. Intrachain disulfides connect cysteine 11-cysteine 59, cysteine 15-cysteine 35, cysteine 21-cysteine 42, and cysteine 25-cysteine 44.

This sequence belongs to the long (4 C-C) scorpion toxin superfamily. Sodium channel inhibitor family. Alpha subfamily. In terms of tissue distribution, expressed by the venom gland.

Its subcellular location is the secreted. Alpha toxins bind voltage-independently at site-3 of sodium channels (Nav) and inhibits the inactivation of the activated channels, thereby blocking neuronal transmission. The protein is Putative alpha-neurotoxin RjAa13 of Rhopalurus junceus (Caribbean blue scorpion).